A 338-amino-acid chain; its full sequence is 1-aminocyclopropane-1-carboxylate deaminase (338 aa).

Lys-51 is modified (N6-(pyridoxal phosphate)lysine). The Nucleophile role is filled by Ser-78.

Belongs to the ACC deaminase/D-cysteine desulfhydrase family. In terms of assembly, homotrimer. Pyridoxal 5'-phosphate serves as cofactor.

The enzyme catalyses 1-aminocyclopropane-1-carboxylate + H2O = 2-oxobutanoate + NH4(+). Its function is as follows. Catalyzes a cyclopropane ring-opening reaction, the irreversible conversion of 1-aminocyclopropane-1-carboxylate (ACC) to ammonia and alpha-ketobutyrate. Allows growth on ACC as a nitrogen source. The protein is 1-aminocyclopropane-1-carboxylate deaminase of Burkholderia orbicola (strain MC0-3).